The sequence spans 306 residues: Acetyl-coenzyme A carboxylase carboxyl transferase subunit beta (306 aa).

The region spanning 25-294 (LWIKDPTSGE…AVNPSNPSPT (270 aa)) is the CoA carboxyltransferase N-terminal domain. The disordered stretch occupies residues 286–306 (VNPSNPSPTDSQPPLSKAEAA). Residues 287-299 (NPSNPSPTDSQPP) are compositionally biased toward polar residues.

This sequence belongs to the AccD/PCCB family. As to quaternary structure, acetyl-CoA carboxylase is a heterohexamer composed of biotin carboxyl carrier protein (AccB), biotin carboxylase (AccC) and two subunits each of ACCase subunit alpha (AccA) and ACCase subunit beta (AccD).

The protein localises to the cytoplasm. It catalyses the reaction N(6)-carboxybiotinyl-L-lysyl-[protein] + acetyl-CoA = N(6)-biotinyl-L-lysyl-[protein] + malonyl-CoA. The protein operates within lipid metabolism; malonyl-CoA biosynthesis; malonyl-CoA from acetyl-CoA: step 1/1. Its function is as follows. Component of the acetyl coenzyme A carboxylase (ACC) complex. Biotin carboxylase (BC) catalyzes the carboxylation of biotin on its carrier protein (BCCP) and then the CO(2) group is transferred by the transcarboxylase to acetyl-CoA to form malonyl-CoA. The chain is Acetyl-coenzyme A carboxylase carboxyl transferase subunit beta from Bartonella quintana (strain Toulouse) (Rochalimaea quintana).